The primary structure comprises 66 residues: Vesicular acetylcholine transporter (66 aa).

A helical membrane pass occupies residues 1 to 15 (GMGLANLLYAPVLLL). Topologically, residues 16–66 (LRNVGLLTRSRSERDVLLDEPPQGLYDAVRLRERPVSGQDGEPRSPPGPFD) are cytoplasmic. The segment at 43 to 66 (AVRLRERPVSGQDGEPRSPPGPFD) is disordered.

Belongs to the major facilitator superfamily. Vesicular transporter family. As to quaternary structure, interacts with SEC14L1.

The protein resides in the cytoplasmic vesicle. Its subcellular location is the secretory vesicle. The protein localises to the synaptic vesicle membrane. The enzyme catalyses acetylcholine(out) + 2 H(+)(in) = acetylcholine(in) + 2 H(+)(out). The catalysed reaction is choline(in) + 2 H(+)(out) = choline(out) + 2 H(+)(in). It catalyses the reaction serotonin(in) + 2 H(+)(out) = serotonin(out) + 2 H(+)(in). Electrogenic antiporter that exchanges one cholinergic neurotransmitter, acetylcholine or choline, with two intravesicular protons across the membrane of synaptic vesicles. Uses the electrochemical proton gradient established by the V-type proton-pump ATPase to store neurotransmitters inside the vesicles prior to their release via exocytosis. Determines cholinergic vesicular quantal size at presynaptic nerve terminals in developing neuro-muscular junctions with an impact on motor neuron differentiation and innervation pattern. Part of forebrain cholinergic system, regulates hippocampal synapse transmissions that underlie spatial memory formation. Can transport serotonin. The sequence is that of Vesicular acetylcholine transporter (SLC18A3) from Macaca fuscata fuscata (Japanese macaque).